The following is a 936-amino-acid chain: Isoleucine--tRNA ligase (936 aa).

The 'HIGH' region motif lies at 58–68 (PYANGRAHLGT). E561 lines the L-isoleucyl-5'-AMP pocket. A 'KMSKS' region motif is present at residues 602–606 (KMSKS). An ATP-binding site is contributed by K605. Zn(2+) is bound by residues C899, C902, C919, and C922.

It belongs to the class-I aminoacyl-tRNA synthetase family. IleS type 1 subfamily. As to quaternary structure, monomer. It depends on Zn(2+) as a cofactor.

The protein localises to the cytoplasm. The catalysed reaction is tRNA(Ile) + L-isoleucine + ATP = L-isoleucyl-tRNA(Ile) + AMP + diphosphate. Catalyzes the attachment of isoleucine to tRNA(Ile). As IleRS can inadvertently accommodate and process structurally similar amino acids such as valine, to avoid such errors it has two additional distinct tRNA(Ile)-dependent editing activities. One activity is designated as 'pretransfer' editing and involves the hydrolysis of activated Val-AMP. The other activity is designated 'posttransfer' editing and involves deacylation of mischarged Val-tRNA(Ile). The polypeptide is Isoleucine--tRNA ligase (Coxiella burnetii (strain CbuK_Q154) (Coxiella burnetii (strain Q154))).